The primary structure comprises 1233 residues: uncharacterized protein (1233 aa).

7 disordered regions span residues 1–39 (MVES…PSTN), 65–116 (QELS…DAIS), 160–211 (AEGT…TDLS), 250–577 (EKMD…DAPR), 594–825 (DLEV…NSEK), 851–872 (NKEN…NSEK), and 902–955 (EDVE…ENSK). Residues 72–83 (KSSKLKGHKKKN) are compositionally biased toward basic residues. Residue Ser180 is modified to Phosphoserine. Residues 183 to 199 (TRRKKNKKKKTTNRRGR) show a composition bias toward basic residues. The segment covering 201–211 (SSNPADTTDLS) has biased composition (polar residues). Basic and acidic residues-rich tracts occupy residues 250–280 (EKMD…ETSS) and 287–300 (NEEK…REEN). The span at 329–345 (GQASTKDVESESLTKNG) shows a compositional bias: polar residues. 2 stretches are compositionally biased toward basic and acidic residues: residues 349–370 (KENE…DRDG) and 379–408 (NQKE…ELSV). Residues 409 to 422 (NHENNMSHNFNAAG) show a composition bias toward polar residues. A Phosphoserine modification is found at Ser462. A compositionally biased stretch (acidic residues) spans 466 to 478 (EKEEEEEEEEEEN). Composition is skewed to basic and acidic residues over residues 484–497 (VKKE…EAVR), 508–527 (STSK…EAGE), 594–622 (DLEV…DKIA), 631–672 (EDMK…KTPE), and 684–711 (RPED…DVKP). Position 523 is a phosphoserine (Ser523). Positions 728–739 (QRVQISTEQAET) are enriched in polar residues. The segment covering 753 to 783 (FKEEEKPKRFEITQEGDKITGKDTNHEHGEA) has biased composition (basic and acidic residues). A compositionally biased stretch (acidic residues) spans 855–868 (EDVEVDTEEDAEVE). Thr861 bears the Phosphothreonine mark. Basic and acidic residues-rich tracts occupy residues 910 to 920 (SKEDIETKCSE) and 935 to 948 (EVSK…TKED). Ser975 carries the phosphoserine modification. Disordered stretches follow at residues 984-1071 (LPEL…PKKA) and 1109-1128 (KDST…KPQD). Positions 986–999 (ELEKQDIKDNKGED) are enriched in basic and acidic residues. 2 positions are modified to phosphoserine: Ser1037 and Ser1046. Basic and acidic residues-rich tracts occupy residues 1062 to 1071 (QSTRENPKKA) and 1118 to 1127 (QSKKNNDKPQ). The 102-residue stretch at 1132–1233 (TSEIRKLNEK…KLRELIYDTI (102 aa)) folds into the Glutaredoxin domain.

This is an uncharacterized protein from Saccharomyces cerevisiae (strain ATCC 204508 / S288c) (Baker's yeast).